The following is a 46-amino-acid chain: GLFSKFAGKGIKNLIFKGVKHIGKEVGMDVIRTGIDVAGCKIKGEC.

As to expression, expressed by the skin glands.

Its subcellular location is the secreted. In terms of biological role, antimicrobial peptide active against the Gram-positive bacterium S.aureus (MIC=12.5 uM) and against the Gram-negative bacterium E.coli (MIC=6 uM). Has no antifungal activity against C.albicans. Shows hemolytic activity against human erythrocytes only at high concentrations (LC(50)=210 uM). This chain is Esculentin-1GRa, found in Odorrana grahami (Yunnanfu frog).